A 541-amino-acid polypeptide reads, in one-letter code: Atrial natriuretic peptide receptor 3 (541 aa).

An N-terminal signal peptide occupies residues methionine 1–glycine 26. Over glycine 27–glutamate 481 the chain is Extracellular. An N-linked (GlcNAc...) (complex) asparagine glycan is attached at asparagine 86. Positions 106, 135, and 136 each coordinate chloride. Disulfide bonds link cysteine 108-cysteine 136 and cysteine 213-cysteine 261. A glycan (N-linked (GlcNAc...) (high mannose) asparagine) is linked at asparagine 293. The N-linked (GlcNAc...) (complex) asparagine glycan is linked to asparagine 394. Residues serine 482–phenylalanine 504 form a helical membrane-spanning segment. Residues arginine 505–alanine 541 lie on the Cytoplasmic side of the membrane.

Belongs to the ANF receptor family. As to quaternary structure, homodimer; disulfide-linked. Dimers can also be formed through the C-terminal cysteine of isoform 2. Interacts with OSTN.

Its subcellular location is the cell membrane. Its function is as follows. Receptor for the natriuretic peptide hormones, binding with similar affinities atrial natriuretic peptide NPPA/ANP, brain natriuretic peptide NPPB/BNP, and C-type natriuretic peptide NPPC/CNP. May function as a clearance receptor for NPPA, NPPB and NPPC, regulating their local concentrations and effects. Acts as a regulator of osteoblast differentiation and bone growth by binding to its ligand osteocrin, thereby preventing binding between NPR3/NPR-C and natriuretic peptides, leading to increase cGMP production. The chain is Atrial natriuretic peptide receptor 3 (NPR3) from Homo sapiens (Human).